The following is a 130-amino-acid chain: Small ribosomal subunit protein uS8x (130 aa).

Belongs to the universal ribosomal protein uS8 family.

This Arabidopsis thaliana (Mouse-ear cress) protein is Small ribosomal subunit protein uS8x (RPS15AD).